The chain runs to 225 residues: Ribosome maturation factor RimM (225 aa).

Residues 144–225 (ADEFYWVDLI…RIVVDWEADY (82 aa)) form the PRC barrel domain.

Belongs to the RimM family. Binds ribosomal protein uS19.

The protein localises to the cytoplasm. Its function is as follows. An accessory protein needed during the final step in the assembly of 30S ribosomal subunit, possibly for assembly of the head region. Essential for efficient processing of 16S rRNA. May be needed both before and after RbfA during the maturation of 16S rRNA. It has affinity for free ribosomal 30S subunits but not for 70S ribosomes. In Burkholderia ambifaria (strain MC40-6), this protein is Ribosome maturation factor RimM.